The chain runs to 406 residues: Cysteine desulfurase (406 aa).

K226 is subject to N6-(pyridoxal phosphate)lysine. Catalysis depends on C364, which acts as the Cysteine persulfide intermediate.

Belongs to the class-V pyridoxal-phosphate-dependent aminotransferase family. Csd subfamily. Homodimer. Interacts with SufE and the SufBCD complex composed of SufB, SufC and SufD. The interaction with SufE is required to mediate the direct transfer of the sulfur atom from the S-sulfanylcysteine. Pyridoxal 5'-phosphate is required as a cofactor.

The protein localises to the cytoplasm. It carries out the reaction (sulfur carrier)-H + L-cysteine = (sulfur carrier)-SH + L-alanine. It catalyses the reaction L-selenocysteine + AH2 = hydrogenselenide + L-alanine + A + H(+). It functions in the pathway cofactor biosynthesis; iron-sulfur cluster biosynthesis. Cysteine desulfurases mobilize the sulfur from L-cysteine to yield L-alanine, an essential step in sulfur metabolism for biosynthesis of a variety of sulfur-containing biomolecules. Component of the suf operon, which is activated and required under specific conditions such as oxidative stress and iron limitation. Acts as a potent selenocysteine lyase in vitro, that mobilizes selenium from L-selenocysteine. Selenocysteine lyase activity is however unsure in vivo. The polypeptide is Cysteine desulfurase (Serratia proteamaculans (strain 568)).